The sequence spans 336 residues: Galactose/methyl galactoside import permease protein MglC (336 aa).

The next 8 membrane-spanning stretches (helical) occupy residues 17 to 37 (AIYF…PTFL), 53 to 73 (LIIA…LSAG), 107 to 127 (VVIL…GLVI), 128 to 148 (AYLN…IYGF), 181 to 201 (FKLS…WIMW), 231 to 251 (LVAI…LEAG), 257 to 277 (TNNL…VGGV), and 306 to 326 (IGVN…LAVA).

This sequence belongs to the binding-protein-dependent transport system permease family. AraH/RbsC subfamily. The complex is composed of one ATP-binding protein (MglA), two transmembrane proteins (MglC) and a solute-binding protein (MglB).

The protein resides in the cell inner membrane. Its function is as follows. Part of the ABC transporter complex MglABC involved in galactose/methyl galactoside import. Probably responsible for the translocation of the substrate across the membrane. The chain is Galactose/methyl galactoside import permease protein MglC (mglC) from Haemophilus influenzae (strain ATCC 51907 / DSM 11121 / KW20 / Rd).